The chain runs to 130 residues: Protein ApaG (130 aa).

In terms of domain architecture, ApaG spans 3 to 127; sequence RALTRDIEVT…FSLDSPGLMR (125 aa).

In Agrobacterium fabrum (strain C58 / ATCC 33970) (Agrobacterium tumefaciens (strain C58)), this protein is Protein ApaG.